Here is a 399-residue protein sequence, read N- to C-terminus: MNTLDFDKQPEETRVVVAMSGGVDSSVVAGLLKQQGYDVLGITLQLYDHGAAVHRAGSCCAGQDIDDARRVCETLGIPHYVLDYEKRFRETVINPFAESYVAGETPIPCVSCNQTVKFADLLATAKELGADALATGHYIRSRPNPSPEHPGRRALYRPADADRDQSYFLFATTQEQIDYLRFPLGGLPKAETRRLAEEMGLVVAKKADSQDICFVPQGKYSDIITKLKPNAALAGEIVHLDGRVLGTHEGILHFTIGQRRGIGIATGEPLYVVFLDARSRRVIVGPKEALETHRVYLRDVNWLGDETLAQAATGDGFACYAKVRSTRAPAPAVLHIDATGTYVDLTVGEAGIAPGQACALYSAPGDNARVFGGGFIERSEREPSAEASLKALLASPVAA.

ATP is bound by residues A18–S25 and L44. C112 functions as the Nucleophile in the catalytic mechanism. The cysteines at positions 112 and 213 are disulfide-linked. G136 lines the ATP pocket. The interval R163 to Q165 is interaction with tRNA. C213 (cysteine persulfide intermediate) is an active-site residue.

This sequence belongs to the MnmA/TRMU family.

The protein resides in the cytoplasm. The enzyme catalyses S-sulfanyl-L-cysteinyl-[protein] + uridine(34) in tRNA + AH2 + ATP = 2-thiouridine(34) in tRNA + L-cysteinyl-[protein] + A + AMP + diphosphate + H(+). Functionally, catalyzes the 2-thiolation of uridine at the wobble position (U34) of tRNA, leading to the formation of s(2)U34. This Rhizobium leguminosarum bv. trifolii (strain WSM2304) protein is tRNA-specific 2-thiouridylase MnmA.